The primary structure comprises 697 residues: MAETSPEPSGQLVVHSDAHSDTVLASFEDQRKKGFLCDITLIVENVHFRAHKALLAASSEYFSMMFAEEGEIGQSIYMLEGMVADTFGILLEFIYTGYLHASEKSTEQILATAQFLKVYDLVKAYTDFQNNHSSPKPTTLNTAGAPVVVISNKKNDPPKRKRGRPKKVNTLQEEKSELAAEEEIQLRVNNSVQNRQNFVVKGDSGVLNEQIAAKEKEESEPTCEPSREEEMPVEKDENYDPKTEDGQASQSRYSKRRIWRSVKLKDYKLVGDQEDHGSAKRICGRRKRPGGPEARCKDCGKVFKYNHFLAIHQRSHTGERPFKCNECGKGFAQKHSLQVHTRMHTGERPYTCTVCSKALTTKHSLLEHMSLHSGQKSFTCDQCGKYFSQNRQLKSHYRVHTGHSLPECKDCHRKFMDVSQLKKHLRTHTGEKPFTCEICGKSFTAKSSLQTHIRIHRGEKPYSCGICGKSFSDSSAKRRHCILHTGKKPFSCPECNLQFARLDNLKAHLKIHSKEKHASDASSISGSSNTEEVRNILQLQPYQLSTSGEQEIQLLVTDSVHNINFMPGPSQGISIVTAESSQNMTADQAANLTLLTQQPEQLQNLILSAQQEQTEHIQSLNMIESQMGPSQTEPVHVITLSKETLEHLHAHQEQTEELHLATSTSDPAQHLQLTQEPGPPPPTHHVPQPTPLGQEQS.

The 124-residue stretch at 10 to 133 folds into the BTB domain; the sequence is GQLVVHSDAH…AYTDFQNNHS (124 aa). Over residues 131–142 the composition is skewed to polar residues; that stretch reads NHSSPKPTTLNT. Disordered stretches follow at residues 131–176 and 209–254; these read NHSS…EEKS and EQIA…SRYS. A DNA-binding region (a.T hook) is located at residues 159-171; sequence KRKRGRPKKVNTL. Over residues 212-245 the composition is skewed to basic and acidic residues; the sequence is AAKEKEESEPTCEPSREEEMPVEKDENYDPKTED. 8 consecutive C2H2-type zinc fingers follow at residues 294–316, 322–344, 350–372, 378–400, 406–428, 434–456, 462–484, and 490–512; these read ARCKDCGKVFKYNHFLAIHQRSH, FKCNECGKGFAQKHSLQVHTRMH, YTCTVCSKALTTKHSLLEHMSLH, FTCDQCGKYFSQNRQLKSHYRVH, PECKDCHRKFMDVSQLKKHLRTH, FTCEICGKSFTAKSSLQTHIRIH, YSCGICGKSFSDSSAKRRHCILH, and FSCPECNLQFARLDNLKAHLKIH. Positions 652 to 697 are disordered; it reads QEQTEELHLATSTSDPAQHLQLTQEPGPPPPTHHVPQPTPLGQEQS. Residues 677–690 are compositionally biased toward pro residues; it reads PGPPPPTHHVPQPT.

Belongs to the krueppel C2H2-type zinc-finger protein family. In terms of assembly, interacts with MN1. As to expression, widely expressed, with highest levels in naive B-cells.

Its subcellular location is the nucleus. Its function is as follows. May be involved in BMP2-induced transcription. The chain is Zinc finger and BTB domain-containing protein 24 (ZBTB24) from Homo sapiens (Human).